The following is a 107-amino-acid chain: Nucleoid-associated protein A1E_05550 (107 aa).

The protein belongs to the YbaB/EbfC family. As to quaternary structure, homodimer.

The protein localises to the cytoplasm. The protein resides in the nucleoid. In terms of biological role, binds to DNA and alters its conformation. May be involved in regulation of gene expression, nucleoid organization and DNA protection. This Rickettsia canadensis (strain McKiel) protein is Nucleoid-associated protein A1E_05550.